Reading from the N-terminus, the 351-residue chain is UDP-N-acetylglucosamine transporter slc35b4 (351 aa).

Helical transmembrane passes span 6 to 26 (LISL…VISL), 37 to 57 (AILV…FVNI), 77 to 97 (IPLK…VLNN), 104 to 124 (IPIP…IVIG), 136 to 156 (QILS…SSMP), 173 to 193 (FSIG…LGLI), 209 to 229 (TIFY…DDIL), 252 to 274 (TLWV…VFIL), 282 to 302 (TCTL…VIYF), and 306 to 326 (FTSL…MYST).

This sequence belongs to the nucleotide-sugar transporter family. SLC35B subfamily.

Its subcellular location is the golgi apparatus membrane. Functionally, sugar transporter that specifically mediates the transport of UDP-N-acetylglucosamine (UDP-GlcNAc) from cytosol into Golgi. This is UDP-N-acetylglucosamine transporter slc35b4 (slc35b4) from Dictyostelium discoideum (Social amoeba).